Consider the following 91-residue polypeptide: Small ribosomal subunit protein uS19 (91 aa).

The protein belongs to the universal ribosomal protein uS19 family.

Functionally, protein S19 forms a complex with S13 that binds strongly to the 16S ribosomal RNA. The sequence is that of Small ribosomal subunit protein uS19 from Janthinobacterium sp. (strain Marseille) (Minibacterium massiliensis).